A 43-amino-acid polypeptide reads, in one-letter code: Disintegrin CV (43 aa).

Disulfide bonds link Cys1-Cys10, Cys6-Cys29, Cys7-Cys34, and Cys19-Cys36. One can recognise a Disintegrin domain in the interval 1 to 43; sequence CTTGPCCRQCKLKPAGTTCWRTSVSSHYCTGRSCECPSYPGNG. The short motif at 21-23 is the Cell attachment site; atypical (RTS) element; the sequence is RTS.

The protein belongs to the disintegrin family. Short disintegrin subfamily. As to quaternary structure, monomer. As to expression, expressed by the venom gland.

It is found in the secreted. Functionally, specifically interacts with the alpha-1/beta-1 integrin (ITGA1/ITGB1). Exhibits highly inhibitory effects on cell adhesion and cell migration to collagens I and IV. Also shows in vivo anti-angiogenic activity. This is Disintegrin CV from Cerastes vipera (Sahara sand viper).